Reading from the N-terminus, the 691-residue chain is Elongation factor G (691 aa).

The 276-residue stretch at 8–283 (EDYRNFGIMA…AVVDFLPSPI (276 aa)) folds into the tr-type G domain. GTP contacts are provided by residues 17 to 24 (AHIDAGKT), 81 to 85 (DTPGH), and 135 to 138 (NKMD).

Belongs to the TRAFAC class translation factor GTPase superfamily. Classic translation factor GTPase family. EF-G/EF-2 subfamily.

The protein localises to the cytoplasm. Functionally, catalyzes the GTP-dependent ribosomal translocation step during translation elongation. During this step, the ribosome changes from the pre-translocational (PRE) to the post-translocational (POST) state as the newly formed A-site-bound peptidyl-tRNA and P-site-bound deacylated tRNA move to the P and E sites, respectively. Catalyzes the coordinated movement of the two tRNA molecules, the mRNA and conformational changes in the ribosome. The protein is Elongation factor G of Xanthobacter autotrophicus (strain ATCC BAA-1158 / Py2).